Here is a 715-residue protein sequence, read N- to C-terminus: Probable GTP diphosphokinase RSH3, chloroplastic (715 aa).

Residues 1–64 (MVVATTIALY…LLFSGASVKS (64 aa)) constitute a chloroplast transit peptide. A compositionally biased stretch (low complexity) spans 65 to 74 (SSSSSSSHPS). The interval 65 to 84 (SSSSSSSHPSVGEELASIRH) is disordered. In terms of domain architecture, HD spans 237–341 (YLQHCVETAM…IKLADRLHNM (105 aa)).

Belongs to the RelA/SpoT family. Expressed in roots, hypocotyls, shoots, cotyledons, rosette and cauline leaves, stems, petals, sepals, stamens, pistils and siliques.

It is found in the plastid. It localises to the chloroplast. The enzyme catalyses GTP + ATP = guanosine 3'-diphosphate 5'-triphosphate + AMP. In terms of biological role, possesses ppGpp (guanosine 3'-diphosphate 5'-diphosphate) synthetase activity in vitro and is able to functionally complement E.coli relA mutants. May be involved in a rapid plant ppGpp-mediated response to pathogens and other stresses. This chain is Probable GTP diphosphokinase RSH3, chloroplastic (RSH3), found in Arabidopsis thaliana (Mouse-ear cress).